The following is a 265-amino-acid chain: 14-3-3-like protein GF14 nu (265 aa).

3 positions are modified to phosphoserine: Ser-67, Ser-109, and Ser-190. Thr-211 is subject to Phosphothreonine. The tract at residues 242 to 265 is disordered; the sequence is AGGDEIKEASKHEPEEGKPAETGQ. Basic and acidic residues predominate over residues 245–265; sequence DEIKEASKHEPEEGKPAETGQ.

Belongs to the 14-3-3 family. In terms of assembly, component of the SERK1 signaling complex, composed of KAPP, CDC48A, GRF6 or GRF7, SERK1, SERK2, SERK3/BAK1 and BRI1. Interacts with DREB1A and DREB1B in the nucleus. Interacts with CINV1.

The protein localises to the nucleus. It localises to the cytoplasm. Is associated with a DNA binding complex that binds to the G box, a well-characterized cis-acting DNA regulatory element found in plant genes. The chain is 14-3-3-like protein GF14 nu (GRF7) from Arabidopsis thaliana (Mouse-ear cress).